The sequence spans 165 residues: Ribosome maturation factor RimM (165 aa).

A PRC barrel domain is found at 94–165 (EDEFYIADLN…YGILNYKREV (72 aa)).

Belongs to the RimM family. In terms of assembly, binds ribosomal protein uS19.

Its subcellular location is the cytoplasm. In terms of biological role, an accessory protein needed during the final step in the assembly of 30S ribosomal subunit, possibly for assembly of the head region. Essential for efficient processing of 16S rRNA. May be needed both before and after RbfA during the maturation of 16S rRNA. It has affinity for free ribosomal 30S subunits but not for 70S ribosomes. The chain is Ribosome maturation factor RimM from Rickettsia canadensis (strain McKiel).